Reading from the N-terminus, the 149-residue chain is DnaJ homolog subfamily C member 24 (149 aa).

In terms of domain architecture, J spans 11 to 82 (DWYSILGADP…ETKREYDLQR (72 aa)). The 56-residue stretch at 93-148 (VDAQVYLEEMSWNEGDHSFYLSCRCGGKYSVSKDEAEEVSLISCDTCSLIIELLHY) folds into the DPH-type MB domain. Zn(2+)-binding residues include cysteine 115, cysteine 117, cysteine 136, and cysteine 139.

Belongs to the DPH4 family. Monomer and homooligomer. Iron binding promotes oligomerization.

The protein localises to the cytoplasm. The protein resides in the cytoskeleton. Its pathway is protein modification; peptidyl-diphthamide biosynthesis. In terms of biological role, stimulates the ATPase activity of several Hsp70-type chaperones. This ability is enhanced by iron-binding. The iron-bound form is redox-active and can function as electron carrier. Plays a role in the diphthamide biosynthesis, a post-translational modification of histidine which occurs in translation elongation factor 2 (EEF2) which can be ADP-ribosylated by diphtheria toxin and by Pseudomonas exotoxin A (Eta). The chain is DnaJ homolog subfamily C member 24 from Homo sapiens (Human).